A 477-amino-acid polypeptide reads, in one-letter code: FAD-dependent monooxygenase paxM (477 aa).

The chain crosses the membrane as a helical span at residues alanine 4–leucine 24. Residues glutamate 35, glycine 49, and arginine 108 each contribute to the FAD site. Residue arginine 195 is part of the active site. Residues aspartate 308 and alanine 321 each contribute to the FAD site. Residues leucine 446 to leucine 466 form a helical membrane-spanning segment.

This sequence belongs to the paxM FAD-dependent monooxygenase family. FAD serves as cofactor.

The protein localises to the membrane. The protein operates within secondary metabolite biosynthesis. In terms of biological role, FAD-dependent monooxygenase; part of the gene cluster that mediates the biosynthesis of paxilline, a mycotoxin that acts as an inhibitor of mammalian maxi-K channels. PaxG, the geranylgeranyl diphosphate (GGPP) synthase is proposed to catalyze the first step in paxilline biosynthesis. Condensation of indole-3-glycerol phosphate with GGPP by paxC then forms 3-geranylgeranylindole (3-GGI), followed by epoxidation and cyclization of this intermediate (by paxM and paxB) to form paspaline. Paspaline is subsequently converted to 13-desoxypaxilline by paxP, the latter being then converted to paxilline by paxQ. Finally paxilline can be mono- and di-prenylated by paxD. In Penicillium paxilli, this protein is FAD-dependent monooxygenase paxM.